The primary structure comprises 211 residues: Protein-L-isoaspartate O-methyltransferase (211 aa).

Residue serine 59 is part of the active site.

Belongs to the methyltransferase superfamily. L-isoaspartyl/D-aspartyl protein methyltransferase family.

The protein localises to the cytoplasm. The catalysed reaction is [protein]-L-isoaspartate + S-adenosyl-L-methionine = [protein]-L-isoaspartate alpha-methyl ester + S-adenosyl-L-homocysteine. Functionally, catalyzes the methyl esterification of L-isoaspartyl residues in peptides and proteins that result from spontaneous decomposition of normal L-aspartyl and L-asparaginyl residues. It plays a role in the repair and/or degradation of damaged proteins. The protein is Protein-L-isoaspartate O-methyltransferase of Ignicoccus hospitalis (strain KIN4/I / DSM 18386 / JCM 14125).